The sequence spans 393 residues: MNSSCKTRVFNIISIIMVSMLILSLGAFANNNKAKADSHSKQLEINVKSDKVPQKVKDLAQQQFAGYAKALDKQSNAKTGKYELGEAFKIYKFNGEEDNSYYYPVIKDGKIVYTLTLSPKNKDDLNKSKEDMNYSVKISNFIAKDLDQIKDKNSNITVLTDEKGFYFEEDGKVRLVKATPLANNIKEKESAKTVSPQLKQELKTTVTPTKVEENEAIQEDQVQYENTLKNFKIREQQFDNSWCAGFSMAALLNATKNTDTYNAHDIMRTLYPEVSEQDLPNCATFPNQMIEYGKSQGRDIHYQEGVPSYNQVDQLTKDNVGIMILAQSVSQNPNDPHLGHALAVVGNAKINDQEKLIYWNPWDTELSIQDADSSLLHLSFNRDYNWYGSMIGY.

The signal sequence occupies residues 1-36 (MNSSCKTRVFNIISIIMVSMLILSLGAFANNNKAKA). A propeptide spanning residues 37-219 (DSHSKQLEIN…KVEENEAIQE (183 aa)) is cleaved from the precursor. Catalysis depends on residues C243, H340, and N360.

This sequence belongs to the peptidase C47 family. As to quaternary structure, in the cytoplasm, prematurely activated/folded SspB forms a stable non-covalent complex with SspC. Post-translationally, proteolytically cleaved by staphylococcal serine protease (SspA).

The protein resides in the secreted. Prematurely activated/folded staphopain B is inhibited by staphostatin B (SspC), which is probably required to protect staphylococcal cytoplasmic proteins from degradation by SspB. In terms of biological role, cysteine protease that plays an important role in the inhibition of host innate immune response. Degrades host elastin, fibrogen, fibronectin and kininogen. Blocks phagocytosis of opsonised S.aureus by neutrophils and monocytes by inducing their death in a proteolytic activity-dependent manner. Decreases surface expression of the 'don't eat me' signal CD31 on neutrophils. Cleaves host galectin-3/LGALS3, thereby inhibiting the neutrophil-activating ability of the lectin. This is Staphopain B (sspB) from Staphylococcus aureus.